The primary structure comprises 447 residues: Na(+)-translocating NADH-quinone reductase subunit A (447 aa).

Belongs to the NqrA family. In terms of assembly, composed of six subunits; NqrA, NqrB, NqrC, NqrD, NqrE and NqrF.

It carries out the reaction a ubiquinone + n Na(+)(in) + NADH + H(+) = a ubiquinol + n Na(+)(out) + NAD(+). Its function is as follows. NQR complex catalyzes the reduction of ubiquinone-1 to ubiquinol by two successive reactions, coupled with the transport of Na(+) ions from the cytoplasm to the periplasm. NqrA to NqrE are probably involved in the second step, the conversion of ubisemiquinone to ubiquinol. The sequence is that of Na(+)-translocating NADH-quinone reductase subunit A from Haemophilus influenzae (strain PittGG).